Consider the following 316-residue polypeptide: Glutamyl-Q tRNA(Asp) synthetase (316 aa).

L-glutamate contacts are provided by residues 13–17 (RFAPS) and aspartate 49. The short motif at 16 to 26 (PSPSGDLHFGS) is the 'HIGH' region element. Positions 105, 107, 119, and 123 each coordinate Zn(2+). The L-glutamate site is built by tyrosine 176 and arginine 194. Positions 232–236 (KLSKQ) match the 'KMSKS' region motif. Residue lysine 235 participates in ATP binding.

Belongs to the class-I aminoacyl-tRNA synthetase family. GluQ subfamily. The cofactor is Zn(2+).

Its function is as follows. Catalyzes the tRNA-independent activation of glutamate in presence of ATP and the subsequent transfer of glutamate onto a tRNA(Asp). Glutamate is transferred on the 2-amino-5-(4,5-dihydroxy-2-cyclopenten-1-yl) moiety of the queuosine in the wobble position of the QUC anticodon. In Photorhabdus laumondii subsp. laumondii (strain DSM 15139 / CIP 105565 / TT01) (Photorhabdus luminescens subsp. laumondii), this protein is Glutamyl-Q tRNA(Asp) synthetase.